Reading from the N-terminus, the 78-residue chain is UPF0349 protein BPUM_2879 (78 aa).

The protein belongs to the UPF0349 family.

This Bacillus pumilus (strain SAFR-032) protein is UPF0349 protein BPUM_2879.